The sequence spans 685 residues: Tripartite terminase subunit 1 (685 aa).

The segment at 173 to 201 adopts a C3H1-type zinc-finger fold; it reads CWRCVGELMVLPNHGNPSTAEGTHVSCNH. 2 disordered regions span residues 231–254 and 394–423; these read EEKA…EAEG and LGRG…SGAL. Residues 395 to 407 are compositionally biased toward basic and acidic residues; the sequence is GRGEEEASRESPE. 619-626 is a binding site for ATP; it reads YNKTWGRS.

Belongs to the herpesviridae TRM1 protein family. As to quaternary structure, associates with TRM2 and TRM3 to form the tripartite terminase complex. Interacts with portal protein.

The protein resides in the host nucleus. Component of the molecular motor that translocates viral genomic DNA in empty capsid during DNA packaging. Forms a tripartite terminase complex together with TRM2 and TRM3 in the host cytoplasm. Once the complex reaches the host nucleus, it interacts with the capsid portal vertex. This portal forms a ring in which genomic DNA is translocated into the capsid. TRM1 carries an endonuclease activity that plays an important role for the cleavage of concatemeric viral DNA into unit length genomes. This chain is Tripartite terminase subunit 1, found in Epstein-Barr virus (strain B95-8) (HHV-4).